A 425-amino-acid polypeptide reads, in one-letter code: Probable threonylcarbamoyladenosine tRNA methylthiotransferase (425 aa).

Residues 2 to 110 (VKVYIENYGC…IVQAVEYAMR (109 aa)) enclose the MTTase N-terminal domain. Residues cysteine 11, cysteine 47, cysteine 76, cysteine 148, cysteine 152, and cysteine 155 each coordinate [4Fe-4S] cluster. The Radical SAM core domain occupies 134–363 (SPRNVYFILP…HRIRLQISYE (230 aa)). The TRAM domain occupies 366 to 425 (RKYIGKKVKVLIHGEGKKGNVDAVTMNYKHIILPEGRKGEFREARVKNAASTYLLGEIIT).

Belongs to the methylthiotransferase family. CDKAL1 subfamily. Requires [4Fe-4S] cluster as cofactor.

The catalysed reaction is N(6)-L-threonylcarbamoyladenosine(37) in tRNA + (sulfur carrier)-SH + AH2 + 2 S-adenosyl-L-methionine = 2-methylsulfanyl-N(6)-L-threonylcarbamoyladenosine(37) in tRNA + (sulfur carrier)-H + 5'-deoxyadenosine + L-methionine + A + S-adenosyl-L-homocysteine + 2 H(+). Catalyzes the methylthiolation of N6-threonylcarbamoyladenosine (t(6)A), leading to the formation of 2-methylthio-N6-threonylcarbamoyladenosine (ms(2)t(6)A) at position 37 in tRNAs that read codons beginning with adenine. In Pyrococcus horikoshii (strain ATCC 700860 / DSM 12428 / JCM 9974 / NBRC 100139 / OT-3), this protein is Probable threonylcarbamoyladenosine tRNA methylthiotransferase.